Here is a 2457-residue protein sequence, read N- to C-terminus: Large tegument protein deneddylase (2457 aa).

Residues 1–234 (MALPASLAGF…SDLHGSKIIL (234 aa)) are deubiquitination activity. The region spanning 13–224 (EGTASTNQAD…IMSHYKVISF (212 aa)) is the Peptidase C76 domain. Residues Cys33, Asp163, and His165 contribute to the active site. Disordered stretches follow at residues 281-350 (EEWT…LPSV), 2064-2131 (ITEG…PIIP), 2164-2360 (GHSG…PQPQ), and 2387-2407 (GMSD…GVTH). Over residues 293–302 (SGRTPPEKMT) the composition is skewed to basic and acidic residues. Positions 314 to 334 (TMDDDVIDLTGDDDMEDESEG) are enriched in acidic residues. A compositionally biased stretch (basic and acidic residues) spans 2080–2091 (TQDHMEEPDNKQ). A compositionally biased stretch (pro residues) spans 2115-2131 (SPSPSPPVLTPIKPIIP). Residues 2173–2186 (HIQSSTPGPAQNTR) show a composition bias toward polar residues. Over residues 2387 to 2398 (GMSDDKNPEPCV) the composition is skewed to basic and acidic residues.

This sequence belongs to the herpesviridae large tegument protein family. In terms of assembly, interacts with host CUL1 and CUL4A; these interactions inhibit the E3 ligase activity of cullins. Interacts with inner tegument protein. Interacts with capsid vertex specific component CVC2. Interacts with the major capsid protein/MCP.

It is found in the virion tegument. Its subcellular location is the host cytoplasm. The protein resides in the host nucleus. It catalyses the reaction Thiol-dependent hydrolysis of ester, thioester, amide, peptide and isopeptide bonds formed by the C-terminal Gly of ubiquitin (a 76-residue protein attached to proteins as an intracellular targeting signal).. Functionally, large tegument protein that plays multiple roles in the viral cycle. During viral entry, remains associated with the capsid while most of the tegument is detached and participates in the capsid transport toward the host nucleus. Plays a role in the routing of the capsid at the nuclear pore complex and subsequent uncoating. Within the host nucleus, acts as a deneddylase and promotes the degradation of nuclear CRLs (cullin-RING ubiquitin ligases) and thereby stabilizes nuclear CRL substrates, while cytoplasmic CRLs remain unaffected. These modifications prevent host cell cycle S-phase progression and create a favorable environment allowing efficient viral genome replication. Participates later in the secondary envelopment of capsids. Indeed, plays a linker role for the association of the outer viral tegument to the capsids together with the inner tegument protein. The protein is Large tegument protein deneddylase of Apodemus sylvaticus (European woodmouse).